Consider the following 900-residue polypeptide: Peroxisomal hydratase-dehydrogenase-epimerase (900 aa).

Short-chain dehydrogenase like stretches follow at residues 6–230 (SFKD…THES) and 319–535 (SLCN…ASEE). Residues Ile-14, Lys-53, Asn-100, Arg-133, Tyr-165, and Lys-169 each coordinate NADP(+). The active-site Proton donor is the Tyr-165. Lys-169 (lowers pKa of active site Tyr) is an active-site residue. (3R)-3-hydroxydecanoyl-CoA-binding residues include His-689, Gly-690, Lys-719, Asp-803, Asn-805, Gly-826, Phe-851, and Thr-852. The MaoC-like domain occupies 775 to 887 (EVPHGKVPDF…DTTRNVIVLD (113 aa)). A Microbody targeting signal motif is present at residues 898-900 (SKL).

It belongs to the short-chain dehydrogenases/reductases (SDR) family. Monomer.

The protein localises to the peroxisome. It catalyses the reaction a (3R)-3-hydroxyacyl-CoA = a (2E)-enoyl-CoA + H2O. The catalysed reaction is a (3R)-3-hydroxyacyl-CoA + NAD(+) = a 3-oxoacyl-CoA + NADH + H(+). The protein operates within lipid metabolism; fatty acid beta-oxidation. Its function is as follows. Second trifunctional enzyme acting on the beta-oxidation pathway for fatty acids, possessing hydratase-dehydrogenase-epimerase activities. Converts trans-2-enoyl-CoA via D-3-hydroxyacyl-CoA to 3-ketoacyl-CoA. This is Peroxisomal hydratase-dehydrogenase-epimerase (FOX2) from Saccharomyces cerevisiae (strain ATCC 204508 / S288c) (Baker's yeast).